An 853-amino-acid polypeptide reads, in one-letter code: NADH-quinone oxidoreductase subunit G 2 (853 aa).

One can recognise a 2Fe-2S ferredoxin-type domain in the interval 1 to 78 (MIKVTIDEQS…GMVVRTNTPL (78 aa)). 4 residues coordinate [2Fe-2S] cluster: cysteine 34, cysteine 45, cysteine 48, and cysteine 62. The region spanning 78-117 (LIEETRSSMLDMLLANHPLDCPICDKGGECELQDMVMAYG) is the 4Fe-4S His(Cys)3-ligated-type domain. [4Fe-4S] cluster-binding residues include histidine 94, cysteine 98, cysteine 101, cysteine 107, cysteine 148, cysteine 151, cysteine 154, cysteine 198, cysteine 224, cysteine 227, cysteine 231, and cysteine 259. 2 consecutive 4Fe-4S ferredoxin-type domains span residues 139 to 170 (PVII…LGTV) and 179 to 209 (TGFE…FPYR). The 57-residue stretch at 217 to 273 (LAETDTICPHCGTGCQLTVGARKGEFMRVRSDWEHGVNRETLCVRGRFGLDFIESRD) folds into the 4Fe-4S Mo/W bis-MGD-type domain.

It belongs to the complex I 75 kDa subunit family. [2Fe-2S] cluster is required as a cofactor. Requires [4Fe-4S] cluster as cofactor.

The catalysed reaction is a quinone + NADH + 5 H(+)(in) = a quinol + NAD(+) + 4 H(+)(out). NDH-1 shuttles electrons from NADH, via FMN and iron-sulfur (Fe-S) centers, to quinones in the respiratory chain. The immediate electron acceptor for the enzyme in this species is believed to be ubiquinone. Couples the redox reaction to proton translocation (for every two electrons transferred, four hydrogen ions are translocated across the cytoplasmic membrane), and thus conserves the redox energy in a proton gradient. The chain is NADH-quinone oxidoreductase subunit G 2 (nuoG2) from Rhizobium meliloti (strain 1021) (Ensifer meliloti).